We begin with the raw amino-acid sequence, 193 residues long: dCTP deaminase (193 aa).

Residues 110 to 115 (RSSLAR), Asp128, 136 to 138 (VLE), Tyr171, Lys178, and Gln182 each bind dCTP. Glu138 functions as the Proton donor/acceptor in the catalytic mechanism. The interval 169 to 193 (RPYNRRQDAKYRDQQGAVASRIDKD) is disordered.

This sequence belongs to the dCTP deaminase family. As to quaternary structure, homotrimer.

It carries out the reaction dCTP + H2O + H(+) = dUTP + NH4(+). Its pathway is pyrimidine metabolism; dUMP biosynthesis; dUMP from dCTP (dUTP route): step 1/2. Its function is as follows. Catalyzes the deamination of dCTP to dUTP. This is dCTP deaminase from Salmonella paratyphi B (strain ATCC BAA-1250 / SPB7).